The sequence spans 99 residues: Large ribosomal subunit protein uL23 (99 aa).

The protein belongs to the universal ribosomal protein uL23 family. As to quaternary structure, part of the 50S ribosomal subunit. Contacts protein L29, and trigger factor when it is bound to the ribosome.

In terms of biological role, one of the early assembly proteins it binds 23S rRNA. One of the proteins that surrounds the polypeptide exit tunnel on the outside of the ribosome. Forms the main docking site for trigger factor binding to the ribosome. The sequence is that of Large ribosomal subunit protein uL23 from Stutzerimonas stutzeri (strain A1501) (Pseudomonas stutzeri).